Here is a 548-residue protein sequence, read N- to C-terminus: Serine/threonine-protein phosphatase 2A 56 kDa regulatory subunit delta 1 isoform (548 aa).

Positions 1–10 (MKGIKSKMLS) are enriched in basic residues. The tract at residues 1–75 (MKGIKSKMLS…KKVPIDTTPT (75 aa)) is disordered. A compositionally biased stretch (basic and acidic residues) spans 27 to 39 (KKSNSHDSSKAPK). Tyr-96 is modified (phosphotyrosine). Ser-99, Ser-109, and Ser-542 each carry phosphoserine.

This sequence belongs to the phosphatase 2A regulatory subunit B family. As to quaternary structure, PP2A consists of a common heterodimeric core enzyme, composed of a 36 kDa catalytic subunit (subunit C) and a 65 kDa constant regulatory subunit (PR65 or subunit A), that associates with a variety of regulatory subunits. Proteins that associate with the core dimer include three families of regulatory subunits B (the R2/B/PR55/B55, R3/B''/PR72/PR130/PR59 and R5/B'/B56 families), the 48 kDa variable regulatory subunit, viral proteins, and cell signaling molecules.

It is found in the cytoplasm. The protein resides in the nucleus. Its function is as follows. The B regulatory subunit might modulate substrate selectivity and catalytic activity, and might also direct the localization of the catalytic enzyme to a particular subcellular compartment. Has a role in cell shape control and septum formation. The sequence is that of Serine/threonine-protein phosphatase 2A 56 kDa regulatory subunit delta 1 isoform (par1) from Schizosaccharomyces pombe (strain 972 / ATCC 24843) (Fission yeast).